A 480-amino-acid chain; its full sequence is UDP-N-acetylmuramate--L-alanine ligase (480 aa).

122-128 (GTHGKTT) is a binding site for ATP.

Belongs to the MurCDEF family.

It localises to the cytoplasm. The catalysed reaction is UDP-N-acetyl-alpha-D-muramate + L-alanine + ATP = UDP-N-acetyl-alpha-D-muramoyl-L-alanine + ADP + phosphate + H(+). It participates in cell wall biogenesis; peptidoglycan biosynthesis. In terms of biological role, cell wall formation. The polypeptide is UDP-N-acetylmuramate--L-alanine ligase (Pseudomonas aeruginosa (strain LESB58)).